The primary structure comprises 222 residues: Small ribosomal subunit protein uS7m (222 aa).

A mitochondrion-targeting transit peptide spans 1–14; sequence MSKKLANFAQKRWI.

This sequence belongs to the universal ribosomal protein uS7 family. In terms of assembly, component of the mitochondrial ribosome small subunit (28S) which comprises a 12S rRNA and about 30 distinct proteins.

The protein localises to the mitochondrion. The protein is Small ribosomal subunit protein uS7m (mrps-7) of Caenorhabditis briggsae.